A 191-amino-acid chain; its full sequence is Protein hugin (191 aa).

An N-terminal signal peptide occupies residues 1 to 24 (MCGPSYCTLLLIAASCYILVCSHA). Residues 25–119 (KSLQGTSKLD…LTYYLLLQKL (95 aa)) constitute a propeptide that is removed on maturation. A leucine amide mark is found at Leu137 and Leu181. The propeptide occupies 185-191 (AQVCGGD).

This sequence belongs to the pyrokinin family. As to expression, expressed in a subgroup of neurosecretory cells in the subesophageal ganglion from embryonic stage 9 to larval stages.

It is found in the secreted. Functionally, probably has a role in larval molting. The chain is Protein hugin (Hug) from Drosophila melanogaster (Fruit fly).